Reading from the N-terminus, the 334-residue chain is ADP-L-glycero-D-manno-heptose-6-epimerase (334 aa).

NADP(+)-binding positions include 11–12 (FI), 32–33 (DN), K39, K54, 77–81 (QGACS), and N94. Y141 acts as the Proton acceptor in catalysis. K145 is a binding site for NADP(+). N171 contributes to the substrate binding site. 2 residues coordinate NADP(+): V172 and K180. Residue K180 is the Proton acceptor of the active site. Substrate-binding positions include R182, H189, 203–206 (FGSN), R216, and Y295.

Belongs to the NAD(P)-dependent epimerase/dehydratase family. HldD subfamily. Homopentamer. NADP(+) serves as cofactor.

The catalysed reaction is ADP-D-glycero-beta-D-manno-heptose = ADP-L-glycero-beta-D-manno-heptose. It functions in the pathway nucleotide-sugar biosynthesis; ADP-L-glycero-beta-D-manno-heptose biosynthesis; ADP-L-glycero-beta-D-manno-heptose from D-glycero-beta-D-manno-heptose 7-phosphate: step 4/4. In terms of biological role, catalyzes the interconversion between ADP-D-glycero-beta-D-manno-heptose and ADP-L-glycero-beta-D-manno-heptose via an epimerization at carbon 6 of the heptose. In Neisseria meningitidis serogroup C (strain 053442), this protein is ADP-L-glycero-D-manno-heptose-6-epimerase.